The chain runs to 876 residues: Alanine--tRNA ligase (876 aa).

H565, H569, C667, and H671 together coordinate Zn(2+).

This sequence belongs to the class-II aminoacyl-tRNA synthetase family. Requires Zn(2+) as cofactor.

The protein localises to the cytoplasm. It carries out the reaction tRNA(Ala) + L-alanine + ATP = L-alanyl-tRNA(Ala) + AMP + diphosphate. Catalyzes the attachment of alanine to tRNA(Ala) in a two-step reaction: alanine is first activated by ATP to form Ala-AMP and then transferred to the acceptor end of tRNA(Ala). Also edits incorrectly charged Ser-tRNA(Ala) and Gly-tRNA(Ala) via its editing domain. This Desulfosudis oleivorans (strain DSM 6200 / JCM 39069 / Hxd3) (Desulfococcus oleovorans) protein is Alanine--tRNA ligase.